Consider the following 485-residue polypeptide: MPAPSLSALAAQLAAKQVSSRELAQQYLDRIAALNPTINAFITVDPEKTLAEAAAADALIAGGAAGPLTGVPIAHKDIFCTDGWLTTCGSKMLANFVAPYDAHVIERCKAAGMPSLGKTNMDEFAMGSSNETSFFGAVKNPWNAGYVPGGSSGGAAACVAARMAPAATGTDTGGSIRQPAALCGITGLKPTYGLVSRYGMIAFASSLDQAGPMAPSAEDCARLLNVITGFDPKDSTSLEREKEDYTRDLDLPLTGLRVGLPCEFFAEGLNNEVAAAVDAAVNELKKLGATTVEISLANSRLAIPVYYVLAPAEASSNLSRFDGVRYGYRAPEYADLNDMYAKTRAQGFGAEVKRRIMIGTYVLSHGYYDAYYLQAQKIRRLIAHDFAEAFKTCDVILGPTAPGTAFKLGEKSDDPVEMYLNDLYTIPANLAGLPGMSLPCGFDSQGLPIGLQLVGDYFSEAKMLNVAHQYQRVTDWHARQPEALA.

Catalysis depends on charge relay system residues lysine 76 and serine 151. Catalysis depends on serine 175, which acts as the Acyl-ester intermediate.

This sequence belongs to the amidase family. GatA subfamily. In terms of assembly, heterotrimer of A, B and C subunits.

The enzyme catalyses L-glutamyl-tRNA(Gln) + L-glutamine + ATP + H2O = L-glutaminyl-tRNA(Gln) + L-glutamate + ADP + phosphate + H(+). In terms of biological role, allows the formation of correctly charged Gln-tRNA(Gln) through the transamidation of misacylated Glu-tRNA(Gln) in organisms which lack glutaminyl-tRNA synthetase. The reaction takes place in the presence of glutamine and ATP through an activated gamma-phospho-Glu-tRNA(Gln). The chain is Glutamyl-tRNA(Gln) amidotransferase subunit A from Thiobacillus denitrificans (strain ATCC 25259 / T1).